A 122-amino-acid polypeptide reads, in one-letter code: Ribosome-binding factor A (122 aa).

The protein belongs to the RbfA family. In terms of assembly, monomer. Binds 30S ribosomal subunits, but not 50S ribosomal subunits or 70S ribosomes.

It localises to the cytoplasm. One of several proteins that assist in the late maturation steps of the functional core of the 30S ribosomal subunit. Associates with free 30S ribosomal subunits (but not with 30S subunits that are part of 70S ribosomes or polysomes). Required for efficient processing of 16S rRNA. May interact with the 5'-terminal helix region of 16S rRNA. The protein is Ribosome-binding factor A of Prosthecochloris aestuarii (strain DSM 271 / SK 413).